Here is a 141-residue protein sequence, read N- to C-terminus: ATP synthase epsilon chain (141 aa).

The protein belongs to the ATPase epsilon chain family. F-type ATPases have 2 components, CF(1) - the catalytic core - and CF(0) - the membrane proton channel. CF(1) has five subunits: alpha(3), beta(3), gamma(1), delta(1), epsilon(1). CF(0) has three main subunits: a, b and c.

The protein localises to the cell inner membrane. Its function is as follows. Produces ATP from ADP in the presence of a proton gradient across the membrane. In Bordetella avium (strain 197N), this protein is ATP synthase epsilon chain.